Consider the following 371-residue polypeptide: Peptide chain release factor 2 (371 aa).

At Gln253 the chain carries N5-methylglutamine.

The protein belongs to the prokaryotic/mitochondrial release factor family. In terms of processing, methylated by PrmC. Methylation increases the termination efficiency of RF2.

It is found in the cytoplasm. Peptide chain release factor 2 directs the termination of translation in response to the peptide chain termination codons UGA and UAA. In Mycobacterium ulcerans (strain Agy99), this protein is Peptide chain release factor 2.